A 495-amino-acid polypeptide reads, in one-letter code: Putative aldehyde dehydrogenase DhaS (495 aa).

Residue Gly-244–Gly-249 coordinates NAD(+). Catalysis depends on residues Glu-266 and Cys-300.

Belongs to the aldehyde dehydrogenase family.

It carries out the reaction an aldehyde + NAD(+) + H2O = a carboxylate + NADH + 2 H(+). The protein is Putative aldehyde dehydrogenase DhaS (dhaS) of Bacillus subtilis (strain 168).